A 249-amino-acid chain; its full sequence is MHCLPLTLLLLLLCSRAEAEEIIGGTESKPHSRPYMAHLEILTLRNHLASCGGFLIRRNFVLTAAHCAGRFIMVTLGAHNIQKKEDTWQKLEVIKQFPHPKYDDLTLRHDIMLLKLKEKANLTLAVGTLPLSPQFNFVPPGRMCRVAGWGKRQVNGSGSDTLQEVKLRLMDPQACRHYMAFDHNLQLCVGNPRKTKSAFKGDSGGPLLCAGVAQGIVSYGQNDAKPPAVFTRISHYRPWINKVLKQNKA.

A signal peptide spans 1 to 19 (MHCLPLTLLLLLLCSRAEA). The propeptide at 20 to 21 (EE) is activation peptide. The Peptidase S1 domain maps to 22–245 (IIGGTESKPH…YRPWINKVLK (224 aa)). A disulfide bond links C51 and C67. Catalysis depends on charge relay system residues H66 and D110. 2 disulfide bridges follow: C144-C209 and C175-C188. S203 (charge relay system) is an active-site residue.

The protein belongs to the peptidase S1 family. Granzyme subfamily.

The protein resides in the secreted. It localises to the cytoplasmic granule. It catalyses the reaction Preferential cleavage: Phe-|-Xaa &gt; Tyr-|-Xaa &gt; Trp-|-Xaa &gt; Leu-|-Xaa.. Its function is as follows. Major secreted protease of mast cells with suspected roles in vasoactive peptide generation, extracellular matrix degradation, and regulation of gland secretion. This chain is Chymase (CMA1), found in Canis lupus familiaris (Dog).